A 146-amino-acid chain; its full sequence is Core protein D2 (146 aa).

Belongs to the orthopoxvirus OPG114 family. Part of a complex composed of the kinase OPG054, OPG092, OPG100, OPG114, OPG115, OPG142 and OPG157.

It is found in the virion. Functionally, late protein which is part of a large complex required for early virion morphogenesis. This complex participates in the formation of virosomes and the incorporation of virosomal contents into nascent immature virions. The protein is Core protein D2 (OPG114) of Vaccinia virus (strain Copenhagen) (VACV).